The primary structure comprises 200 residues: Small ribosomal subunit protein eS1 (200 aa).

Belongs to the eukaryotic ribosomal protein eS1 family.

In Thermococcus sibiricus (strain DSM 12597 / MM 739), this protein is Small ribosomal subunit protein eS1.